A 72-amino-acid chain; its full sequence is Translation initiation factor IF-1 (72 aa).

Residues 1–72 enclose the S1-like domain; sequence MAKEDAIELQ…SKGRIVFRAR (72 aa).

This sequence belongs to the IF-1 family. In terms of assembly, component of the 30S ribosomal translation pre-initiation complex which assembles on the 30S ribosome in the order IF-2 and IF-3, IF-1 and N-formylmethionyl-tRNA(fMet); mRNA recruitment can occur at any time during PIC assembly.

It is found in the cytoplasm. Its function is as follows. One of the essential components for the initiation of protein synthesis. Stabilizes the binding of IF-2 and IF-3 on the 30S subunit to which N-formylmethionyl-tRNA(fMet) subsequently binds. Helps modulate mRNA selection, yielding the 30S pre-initiation complex (PIC). Upon addition of the 50S ribosomal subunit IF-1, IF-2 and IF-3 are released leaving the mature 70S translation initiation complex. The protein is Translation initiation factor IF-1 of Aliivibrio fischeri (strain ATCC 700601 / ES114) (Vibrio fischeri).